The following is a 218-amino-acid chain: Adenylate kinase (218 aa).

10–15 (GAGKGT) contacts ATP. Residues 30–59 (STGDMLRAAIQAQTPLGLEAKKVMDDGKLV) form an NMP region. AMP contacts are provided by residues Thr-31, Arg-36, 57–59 (KLV), 85–88 (GFPR), and Gln-92. Residues 122-159 (GRRVHLASGRTYHVIFNPPKKEGVDDITGEPLIQREDD) are LID. Residues Arg-123 and 132–133 (TY) each bind ATP. AMP is bound by residues Arg-156 and Arg-167. An ATP-binding site is contributed by Gly-203.

This sequence belongs to the adenylate kinase family. As to quaternary structure, monomer.

The protein localises to the cytoplasm. It carries out the reaction AMP + ATP = 2 ADP. The protein operates within purine metabolism; AMP biosynthesis via salvage pathway; AMP from ADP: step 1/1. In terms of biological role, catalyzes the reversible transfer of the terminal phosphate group between ATP and AMP. Plays an important role in cellular energy homeostasis and in adenine nucleotide metabolism. The protein is Adenylate kinase of Prosthecochloris aestuarii (strain DSM 271 / SK 413).